A 494-amino-acid chain; its full sequence is Probable malate:quinone oxidoreductase (494 aa).

The protein belongs to the MQO family. It depends on FAD as a cofactor.

The catalysed reaction is (S)-malate + a quinone = a quinol + oxaloacetate. Its pathway is carbohydrate metabolism; tricarboxylic acid cycle; oxaloacetate from (S)-malate (quinone route): step 1/1. The polypeptide is Probable malate:quinone oxidoreductase (Kocuria rhizophila (strain ATCC 9341 / DSM 348 / NBRC 103217 / DC2201)).